Consider the following 339-residue polypeptide: Erlin-2 (339 aa).

Topologically, residues 1–3 are cytoplasmic; that stretch reads MAQ. Residues 4-24 traverse the membrane as a helical segment; the sequence is LGAVVAVASSFFCASLFSAVH. Topologically, residues 25 to 339 are lumenal; sequence KIEEGHIGVY…EPLETATKEN (315 aa). Residue asparagine 106 is glycosylated (N-linked (GlcNAc...) asparagine). The segment at 177 to 309 is interaction with ERLIN1; the sequence is EAIRRNYELM…DIPNMFMDSA (133 aa). Lysine 267 carries the post-translational modification N6-acetyllysine.

The protein belongs to the band 7/mec-2 family. Forms a heteromeric complex with ERLIN1. In complex with ERLIN1, interacts with RNF170. Interacts with activated ITPR1, independently of the degree of ITPR1 polyubiquitination. Interacts with SCAP, INSIG1, SREBF1 and SREBF2 under cholesterol sufficiency conditions; indicative for an association with the SCAP-SREBP-INSIG complex. Probably part of an AMFR/gp78 and INSIG1-containing ubiquitin ligase complex involved in ERAD of HMGCR. Interacts with TMUB1; TMUB1 bridges the association with AMFR. Interacts with SYVN1 and RNF139. Interacts with TMEM259. Interacts with TMEM41B. Deubiquitinated by USP25; leading to stabilization. As to expression, ubiquitous.

The protein resides in the endoplasmic reticulum membrane. In terms of biological role, component of the ERLIN1/ERLIN2 complex which mediates the endoplasmic reticulum-associated degradation (ERAD) of inositol 1,4,5-trisphosphate receptors (IP3Rs) such as ITPR1. Promotes sterol-accelerated ERAD of HMGCR probably implicating an AMFR/gp78-containing ubiquitin ligase complex. Involved in regulation of cellular cholesterol homeostasis by regulation the SREBP signaling pathway. May promote ER retention of the SCAP-SREBF complex. The polypeptide is Erlin-2 (ERLIN2) (Homo sapiens (Human)).